A 1204-amino-acid polypeptide reads, in one-letter code: Major DNA-binding protein (1204 aa).

A disordered region spans residues 289–314; the sequence is SGTTTARGARRNDVNSTSKPSPSGGF. Residues 497–510 fold into a zinc finger; it reads CSLCEKHTRPVCAH. 2 consecutive short sequence motifs (required for filament formation) follow at residues 841–842 and 1146–1148; these read FW and FNF. The tract at residues 1177–1204 is required for nuclear localization; that stretch reads LKRPPEDDELFDLSGIPIKHGNITMEMI.

It belongs to the herpesviridae major DNA-binding protein family. As to quaternary structure, homooligomers. Forms double-helical filaments necessary for the formation of replication compartments within the host nucleus. Interacts with the origin-binding protein. Interacts with the helicase primase complex; this interaction stimulates primer synthesis activity of the helicase-primase complex. Interacts with the DNA polymerase. Interacts with the alkaline exonuclease; this interaction increases its nuclease processivity.

The protein resides in the host nucleus. Functionally, plays several crucial roles in viral infection. Participates in the opening of the viral DNA origin to initiate replication by interacting with the origin-binding protein. May disrupt loops, hairpins and other secondary structures present on ssDNA to reduce and eliminate pausing of viral DNA polymerase at specific sites during elongation. Promotes viral DNA recombination by performing strand-transfer, characterized by the ability to transfer a DNA strand from a linear duplex to a complementary single-stranded DNA circle. Can also catalyze the renaturation of complementary single strands. Additionally, reorganizes the host cell nucleus, leading to the formation of prereplicative sites and replication compartments. This process is driven by the protein which can form double-helical filaments in the absence of DNA. This Homo sapiens (Human) protein is Major DNA-binding protein.